Consider the following 231-residue polypeptide: Lipoprotein-releasing system ATP-binding protein LolD (231 aa).

The 226-residue stretch at 6–231 folds into the ABC transporter domain; that stretch reads LQVQAVSKSY…YLQAVAEHAQ (226 aa). ATP is bound at residue 42 to 49; sequence GTSGSGKS.

This sequence belongs to the ABC transporter superfamily. Lipoprotein translocase (TC 3.A.1.125) family. In terms of assembly, the complex is composed of two ATP-binding proteins (LolD) and two transmembrane proteins (LolC and LolE).

It localises to the cell inner membrane. Part of the ABC transporter complex LolCDE involved in the translocation of mature outer membrane-directed lipoproteins, from the inner membrane to the periplasmic chaperone, LolA. Responsible for the formation of the LolA-lipoprotein complex in an ATP-dependent manner. This is Lipoprotein-releasing system ATP-binding protein LolD from Shewanella sp. (strain MR-7).